Consider the following 269-residue polypeptide: Shikimate dehydrogenase (NADP(+)) (269 aa).

Shikimate contacts are provided by residues 13 to 15 (SLS) and threonine 60. The Proton acceptor role is filled by lysine 64. Residue glutamate 76 coordinates NADP(+). Residues asparagine 85 and aspartate 100 each contribute to the shikimate site. NADP(+) contacts are provided by residues 124–128 (GAGGA), 148–153 (NRTMSR), and isoleucine 209. Tyrosine 211 serves as a coordination point for shikimate. Glycine 232 is a binding site for NADP(+). Glutamine 239 lines the shikimate pocket.

This sequence belongs to the shikimate dehydrogenase family. As to quaternary structure, monomer or homodimer.

It catalyses the reaction shikimate + NADP(+) = 3-dehydroshikimate + NADPH + H(+). Its pathway is metabolic intermediate biosynthesis; chorismate biosynthesis; chorismate from D-erythrose 4-phosphate and phosphoenolpyruvate: step 4/7. Involved in the biosynthesis of the chorismate, which leads to the biosynthesis of aromatic amino acids. Catalyzes the reversible NADPH linked reduction of 3-dehydroshikimate (DHSA) to yield shikimate (SA). It can also use NAD to oxidize shikimate. The polypeptide is Shikimate dehydrogenase (NADP(+)) (Staphylococcus epidermidis (strain ATCC 35984 / DSM 28319 / BCRC 17069 / CCUG 31568 / BM 3577 / RP62A)).